A 220-amino-acid chain; its full sequence is Ras-related protein Rab-3A (220 aa).

Positions 31, 32, 33, 34, 35, 36, 37, 48, 49, 53, and 54 each coordinate GTP. T36 contacts Mg(2+). The Switch 1 motif lies at 49–58; sequence PAFVSTVGID. Mg(2+) is bound by residues T54 and D77. G80 is a GTP binding site. The short motif at 80 to 96 is the Switch 2 element; that stretch reads GQERYRTITTAYYRGAM. T86 carries the phosphothreonine; by LRRK2 modification. N135, K136, D138, A166, and K167 together coordinate GTP. Residues S188 and S190 each carry the phosphoserine modification. The segment at 194–220 is disordered; that stretch reads ADPAVTGAKQGPQLSDQQVPPHQDCAC. 2 S-geranylgeranyl cysteine lipidation sites follow: C218 and C220. C220 is subject to Cysteine methyl ester.

It belongs to the small GTPase superfamily. Rab family. Interacts with RIMS1 and RIMS2. Interacts with Rabphilin-3A/RPH3A and Rab effector Noc2/RPH3AL. Interacts with SYTL4. Interacts with RAB3IP. Interacts with SGSM1 and SGSM3. Interacts with SYT1. Interacts with MYH9; this interaction is essential for lysosome exocytosis and plasma membrane repair. Interacts with STXBP1; this interaction promotes RAB3A dissociation from the vesicle membrane. Interacts with SNCA. The GTP-bound form interacts with REP15. Interacts with GDI1, GDI2, CHM and CHML; phosphorylation at Thr-86 disrupts these interactions. Interacts with MADD (via uDENN domain); the GTP-bound form is preferred for interaction. Requires Mg(2+) as cofactor. Post-translationally, phosphorylation of Thr-86 in the switch II region by LRRK2 prevents the association of RAB regulatory proteins, including CHM, CHML and RAB GDP dissociation inhibitors GDI1 and GDI2. Specifically expressed in brain.

The protein resides in the cytoplasm. It is found in the cytosol. The protein localises to the lysosome. Its subcellular location is the cytoplasmic vesicle. It localises to the secretory vesicle. The protein resides in the cell projection. It is found in the axon. The protein localises to the cell membrane. Its subcellular location is the presynapse. It localises to the postsynapse. The catalysed reaction is GTP + H2O = GDP + phosphate + H(+). Its activity is regulated as follows. Regulated by guanine nucleotide exchange factors (GEFs) including RAB3IL1 and MADD which promote the exchange of bound GDP for free GTP. Regulated by GTPase activating proteins (GAPs) including RAB3GAP1 and TBC1D10B which increase the GTP hydrolysis activity. Inhibited by GDP dissociation inhibitors (GDIs) which prevent Rab-GDP dissociation. In terms of biological role, the small GTPases Rab are key regulators of intracellular membrane trafficking, from the formation of transport vesicles to their fusion with membranes. Rabs cycle between an inactive GDP-bound form and an active GTP-bound form that is able to recruit to membranes different sets of downstream effectors directly responsible for vesicle formation, movement, tethering and fusion. RAB3A plays a central role in regulated exocytosis and secretion. Controls the recruitment, tethering and docking of secretory vesicles to the plasma membrane. Upon stimulation, switches to its active GTP-bound form, cycles to vesicles and recruits effectors such as RIMS1, RIMS2, Rabphilin-3A/RPH3A, RPH3AL or SYTL4 to help the docking of vesicules onto the plasma membrane. Upon GTP hydrolysis by GTPase-activating protein, dissociates from the vesicle membrane allowing the exocytosis to proceed. Stimulates insulin secretion through interaction with RIMS2 or RPH3AL effectors in pancreatic beta cells. Regulates calcium-dependent lysosome exocytosis and plasma membrane repair (PMR) via the interaction with 2 effectors, SYTL4 and myosin-9/MYH9. Acts as a positive regulator of acrosome content secretion in sperm cells by interacting with RIMS1. Also plays a role in the regulation of dopamine release by interacting with synaptotagmin I/SYT. This is Ras-related protein Rab-3A from Homo sapiens (Human).